The following is a 134-amino-acid chain: Viral interleukin-8 homolog (134 aa).

The signal sequence occupies residues 1 to 22 (MQALLLVLVLFIVQIYLLPGNG).

The protein belongs to the intercrine alpha (chemokine CxC) family. Homodimer.

It is found in the secreted. Plays a role in the early phase of cytolytic infections presumably by recruiting host B or T-lymphocytes. The protein is Viral interleukin-8 homolog (MDV078) of Gallus gallus (Chicken).